A 370-amino-acid polypeptide reads, in one-letter code: 3-dehydroquinate synthase (370 aa).

Residues 107-111 (GVIGD), 131-132 (TS), Lys-144, and Lys-153 contribute to the NAD(+) site. Positions 186, 249, and 267 each coordinate Zn(2+).

This sequence belongs to the sugar phosphate cyclases superfamily. Dehydroquinate synthase family. Requires Co(2+) as cofactor. The cofactor is Zn(2+). NAD(+) serves as cofactor.

It localises to the cytoplasm. It catalyses the reaction 7-phospho-2-dehydro-3-deoxy-D-arabino-heptonate = 3-dehydroquinate + phosphate. It functions in the pathway metabolic intermediate biosynthesis; chorismate biosynthesis; chorismate from D-erythrose 4-phosphate and phosphoenolpyruvate: step 2/7. Functionally, catalyzes the conversion of 3-deoxy-D-arabino-heptulosonate 7-phosphate (DAHP) to dehydroquinate (DHQ). In Jannaschia sp. (strain CCS1), this protein is 3-dehydroquinate synthase.